The sequence spans 691 residues: Pentatricopeptide repeat-containing protein ATP4, chloroplastic (691 aa).

Positions Met-1–Trp-17 are enriched in low complexity. Residues Met-1 to Val-35 constitute a chloroplast transit peptide. The segment at Met-1 to Asn-76 is disordered. The segment covering Ala-24–Ser-33 has biased composition (polar residues). A compositionally biased stretch (pro residues) spans Pro-45–Asp-56. A compositionally biased stretch (polar residues) spans Gly-61–Asn-76. PPR repeat units lie at residues Lys-163–Pro-197, Asp-198–Pro-232, Asp-233–Leu-267, Asp-268–Pro-302, Asn-303–Pro-337, Ser-338–Ile-372, Asp-373–Ser-403, Asp-411–Pro-445, Asn-446–Pro-480, and Lys-546–Ala-580. The region spanning Leu-592–Lys-677 is the Smr domain.

It belongs to the PPR family. P subfamily.

The protein localises to the plastid. It localises to the chloroplast stroma. Its function is as follows. Involved in translation and accumulation of chloroplast ATP synthase subunits. Interacts with the 5'-UTR of the chloroplast bicistronic atpB and atpE mRNA and activates its translation by facilitating ribosome association with the mRNA. Required for accumulation and activity of the chloroplast ATP synthase. Enhances atpA translation and is required for accumulation of specific processed atpF and psaJ transcripts. Required for the stabilization of bicistronic rpl16 and rpl14 mRNAs. In Zea mays (Maize), this protein is Pentatricopeptide repeat-containing protein ATP4, chloroplastic.